The primary structure comprises 444 residues: Ras-related protein RabX (444 aa).

29-36 (GGDVCSKN) contributes to the GTP binding site. The Effector region motif lies at 51–58 (LIQVFDDY). 73–77 (EFSSI) provides a ligand contact to GTP. Residues 91–136 (ENNKNKNNNNNYNYNNNNYNNNNNNNNNNNNNNNNNNNNNNNNNNS) form a disordered region. Positions 95 to 135 (NKNNNNNYNYNNNNYNNNNNNNNNNNNNNNNNNNNNNNNNN) are enriched in low complexity. 207–210 (NDSN) is a binding site for GTP. 2 disordered regions span residues 213-232 (TPNF…SNII) and 298-401 (LQGD…NNDL). 2 stretches are compositionally biased toward low complexity: residues 217–232 (SDSS…SNII) and 303–399 (NNNN…TYNN). Cys-439 carries S-palmitoyl cysteine lipidation. Cys-441 bears the Cysteine methyl ester mark. Residue Cys-441 is the site of S-geranylgeranyl cysteine attachment. The propeptide at 442 to 444 (NLM) is removed in mature form.

The protein belongs to the small GTPase superfamily. Rab family.

It is found in the cell membrane. This chain is Ras-related protein RabX (rabX), found in Dictyostelium discoideum (Social amoeba).